A 717-amino-acid chain; its full sequence is ATP-dependent zinc metalloprotease FtsH (717 aa).

Over 1–7 (MFKDKKM) the chain is Cytoplasmic. A helical membrane pass occupies residues 8–28 (LKYIVIYSIIAFGILLTFNMV). Topologically, residues 29–109 (KDEMLYEKVD…VEFNVTKPEN (81 aa)) are extracellular. A helical transmembrane segment spans residues 110–130 (YQLLGLLMSWVFPLILIFFVG). At 131 to 717 (RMMFSKMNNK…SSTNNKVDGE (587 aa)) the chain is on the cytoplasmic side. An ATP-binding site is contributed by 206–213 (GPPGTGKT). His-427 contributes to the Zn(2+) binding site. Glu-428 is a catalytic residue. Residues His-431 and Asp-504 each contribute to the Zn(2+) site. The tract at residues 670–717 (KLARANNEANNDALDSSKENEEVKSNVNDGATEEKKDDSSTNNKVDGE) is disordered. Basic and acidic residues-rich tracts occupy residues 684–693 (DSSKENEEVK) and 701–717 (TEEK…VDGE).

The protein in the central section; belongs to the AAA ATPase family. In the C-terminal section; belongs to the peptidase M41 family. As to quaternary structure, homohexamer. Zn(2+) serves as cofactor.

It is found in the cell membrane. Its function is as follows. Acts as a processive, ATP-dependent zinc metallopeptidase for both cytoplasmic and membrane proteins. Plays a role in the quality control of integral membrane proteins. The polypeptide is ATP-dependent zinc metalloprotease FtsH (Clostridium perfringens (strain ATCC 13124 / DSM 756 / JCM 1290 / NCIMB 6125 / NCTC 8237 / Type A)).